The primary structure comprises 402 residues: MVTLRRLAVLLGAIPAALAAPTTQKREVVPNKYIVTLKEGASNFDSHISWVSDIHKRSLSRRSTAGIEKEFHIDTFNAYVGEFDETTIEEIKNNPDVLEVEEDQIWHLFDEQDEGEFSTAALVTQNGAWGLGTISHRQPGSTSYIYDDSAGSGTYAYVVDTGILESHNEFSGRAITGYNAVGGSNADTNGHGTHVAGTIGGRTYGVAKNTNLIAVKVFRGSSSSTSIILDGFNWAVNDIINRGRQNKAAISMSLGGGYSSAFNNAVNTAYSRGVLSVVAAGNDNQNAANYSPASAANAITVGSIASNWARSSFSNYGSVLDIFAPGTSILSAWIGGNSATNTISGTSMATPHVTGVVLYLQALEGLTTSGAAARLNALATTGRVSNPGSGSPNRILYNGNGA.

The first 20 residues, 1 to 20 (MVTLRRLAVLLGAIPAALAA), serve as a signal peptide directing secretion. A propeptide spanning residues 21-120 (PTTQKREVVP…EQDEGEFSTA (100 aa)) is cleaved from the precursor. In terms of domain architecture, Inhibitor I9 spans 32 to 108 (KYIVTLKEGA…EVEEDQIWHL (77 aa)). Residues 128–402 (AWGLGTISHR…NRILYNGNGA (275 aa)) enclose the Peptidase S8 domain. Active-site charge relay system residues include aspartate 160, histidine 191, and serine 347. The segment covering 382–392 (GRVSNPGSGSP) has biased composition (polar residues). The tract at residues 382-402 (GRVSNPGSGSPNRILYNGNGA) is disordered.

It belongs to the peptidase S8 family.

This Hapsidospora chrysogena (Acremonium chrysogenum) protein is Alkaline proteinase (ALP).